A 328-amino-acid polypeptide reads, in one-letter code: D-cysteine desulfhydrase (328 aa).

Lys51 is modified (N6-(pyridoxal phosphate)lysine).

It belongs to the ACC deaminase/D-cysteine desulfhydrase family. Homodimer. Requires pyridoxal 5'-phosphate as cofactor.

The enzyme catalyses D-cysteine + H2O = hydrogen sulfide + pyruvate + NH4(+) + H(+). Its function is as follows. Catalyzes the alpha,beta-elimination reaction of D-cysteine and of several D-cysteine derivatives. It could be a defense mechanism against D-cysteine. The chain is D-cysteine desulfhydrase from Salmonella schwarzengrund (strain CVM19633).